We begin with the raw amino-acid sequence, 359 residues long: DNA polymerase IV (359 aa).

The UmuC domain maps to 7–188; it reads IIHIDMDAFY…IPIGKFFGVG (182 aa). Residues Asp-11 and Asp-106 each coordinate Mg(2+). Residue Glu-107 is part of the active site.

It belongs to the DNA polymerase type-Y family. As to quaternary structure, monomer. Mg(2+) serves as cofactor.

It is found in the cytoplasm. The catalysed reaction is DNA(n) + a 2'-deoxyribonucleoside 5'-triphosphate = DNA(n+1) + diphosphate. Functionally, poorly processive, error-prone DNA polymerase involved in untargeted mutagenesis. Copies undamaged DNA at stalled replication forks, which arise in vivo from mismatched or misaligned primer ends. These misaligned primers can be extended by PolIV. Exhibits no 3'-5' exonuclease (proofreading) activity. May be involved in translesional synthesis, in conjunction with the beta clamp from PolIII. This is DNA polymerase IV from Clostridium perfringens (strain ATCC 13124 / DSM 756 / JCM 1290 / NCIMB 6125 / NCTC 8237 / Type A).